A 230-amino-acid polypeptide reads, in one-letter code: Sugar fermentation stimulation protein homolog (230 aa).

The protein belongs to the SfsA family.

The chain is Sugar fermentation stimulation protein homolog from Caldivirga maquilingensis (strain ATCC 700844 / DSM 13496 / JCM 10307 / IC-167).